The chain runs to 195 residues: Dephospho-CoA kinase (195 aa).

The DPCK domain maps to 3–195 (IIGLTGSIAM…LFVIKSLLKN (193 aa)). 11-16 (AMGKST) is a binding site for ATP.

Belongs to the CoaE family.

The protein localises to the cytoplasm. The catalysed reaction is 3'-dephospho-CoA + ATP = ADP + CoA + H(+). The protein operates within cofactor biosynthesis; coenzyme A biosynthesis; CoA from (R)-pantothenate: step 5/5. Catalyzes the phosphorylation of the 3'-hydroxyl group of dephosphocoenzyme A to form coenzyme A. This is Dephospho-CoA kinase from Bartonella henselae (strain ATCC 49882 / DSM 28221 / CCUG 30454 / Houston 1) (Rochalimaea henselae).